The sequence spans 363 residues: Ribonuclease P protein subunit p40 (363 aa).

As to quaternary structure, component of nuclear RNase P and RNase MRP ribonucleoproteins. RNase P consists of a catalytic RNA moiety and about 10 protein subunits; POP1, POP4, POP5, POP7, RPP14, RPP21, RPP25, RPP30, RPP38 and RPP40. Within the RNase P complex, POP1, POP7 and RPP25 form the 'finger' subcomplex, POP5, RPP14, RPP40 and homodimeric RPP30 form the 'palm' subcomplex, and RPP21, POP4 and RPP38 form the 'wrist' subcomplex. All subunits of the RNase P complex interact with the catalytic RNA. Several subunits of RNase P are also part of the RNase MRP complex. RNase MRP consists of a catalytic RNA moiety and about 8 protein subunits; POP1, POP7, RPP25, RPP30, RPP38, RPP40 and possibly also POP4 and POP5.

The protein resides in the nucleus. It is found in the nucleolus. Component of ribonuclease P, a ribonucleoprotein complex that generates mature tRNA molecules by cleaving their 5'-ends. Also a component of the MRP ribonuclease complex, which cleaves pre-rRNA sequences. The protein is Ribonuclease P protein subunit p40 (Rpp40) of Mus musculus (Mouse).